Reading from the N-terminus, the 159-residue chain is 17.7 kDa class I heat shock protein (159 aa).

The region spanning 45 to 159 (DAAAFAGARI…PDVKSIQISG (115 aa)) is the sHSP domain.

It belongs to the small heat shock protein (HSP20) family. In terms of assembly, may form oligomeric structures.

It is found in the cytoplasm. The sequence is that of 17.7 kDa class I heat shock protein (HSP17.7) from Oryza sativa subsp. japonica (Rice).